A 426-amino-acid polypeptide reads, in one-letter code: MLDSKQLRTELQVVADRLATRGFSLDVARIESLEERRKSVQTRTEQLQAERNARSKSIGQAKAKGEDIAPLMADVERMANELAEGKTELDGIQAELDAILLTIPNLPDASVPVGASEEENVEVRRWGTPATFDFEIKDHVALGEISRGLDFEAAAKLSGARFAVLRGPIARLHRALAQFMINLHTGEHGYEEHYTPYLVQAPALQGTGQLPKFEEDLFKISREGEADFYLIPTAEVSLTNLVAGEIIDAKQLPIKLVAHTPCFRSEAGASGRDTRGMIRQHQFDKVEMVQVVEPSKSMEALEGLTANAERVLQLLELPYRVLALCTGDMGFGAVKTYDLEVWVPSQDKYREISSCSNCGDFQARRMQARWRNPETGKPELVHTLNGSGLAVGRTLVAVLENYQQADGSIRVPEVLKPYMGGVEVIR.

Residues 37–63 (RKSVQTRTEQLQAERNARSKSIGQAKA) form a disordered region. 233-235 (TAE) contributes to the L-serine binding site. An ATP-binding site is contributed by 264 to 266 (RSE). Glutamate 287 is a binding site for L-serine. 351-354 (EISS) lines the ATP pocket. Residue serine 387 participates in L-serine binding.

Belongs to the class-II aminoacyl-tRNA synthetase family. Type-1 seryl-tRNA synthetase subfamily. As to quaternary structure, homodimer. The tRNA molecule binds across the dimer.

It is found in the cytoplasm. It catalyses the reaction tRNA(Ser) + L-serine + ATP = L-seryl-tRNA(Ser) + AMP + diphosphate + H(+). The catalysed reaction is tRNA(Sec) + L-serine + ATP = L-seryl-tRNA(Sec) + AMP + diphosphate + H(+). It participates in aminoacyl-tRNA biosynthesis; selenocysteinyl-tRNA(Sec) biosynthesis; L-seryl-tRNA(Sec) from L-serine and tRNA(Sec): step 1/1. Catalyzes the attachment of serine to tRNA(Ser). Is also able to aminoacylate tRNA(Sec) with serine, to form the misacylated tRNA L-seryl-tRNA(Sec), which will be further converted into selenocysteinyl-tRNA(Sec). In Pseudomonas entomophila (strain L48), this protein is Serine--tRNA ligase.